The chain runs to 196 residues: Peroxiredoxin TSA1-B (196 aa).

In terms of domain architecture, Thioredoxin spans 3–161 (PVVQQPAPSF…SLRLLEAFQF (159 aa)). 45-47 (TFV) is a substrate binding site. C48 functions as the Cysteine sulfenic acid (-SOH) intermediate in the catalytic mechanism. R124 contributes to the substrate binding site. The disordered stretch occupies residues 173–196 (WHPGDETIKPSPEASKEYFNKVNK). A compositionally biased stretch (basic and acidic residues) spans 175 to 196 (PGDETIKPSPEASKEYFNKVNK).

It belongs to the peroxiredoxin family. AhpC/Prx1 subfamily. In terms of assembly, homodimer; disulfide-linked, upon oxidation.

It is found in the cell surface. The protein localises to the nucleus. It localises to the cytoplasm. The enzyme catalyses a hydroperoxide + [thioredoxin]-dithiol = an alcohol + [thioredoxin]-disulfide + H2O. Functionally, thiol-specific peroxidase that catalyzes the reduction of hydrogen peroxide and organic hydroperoxides to water and alcohols, respectively. Plays a role in cell protection against oxidative stress by detoxifying peroxides and as sensor of hydrogen peroxide-mediated signaling events. Also involved in the correct composition of the hyphal cell wall. The sequence is that of Peroxiredoxin TSA1-B from Candida albicans (strain SC5314 / ATCC MYA-2876) (Yeast).